The following is a 314-amino-acid chain: tRNA dimethylallyltransferase (314 aa).

12–19 (GPTAGGKS) lines the ATP pocket. 14-19 (TAGGKS) is a binding site for substrate. Positions 37-40 (DSMQ) are interaction with substrate tRNA.

This sequence belongs to the IPP transferase family. In terms of assembly, monomer. It depends on Mg(2+) as a cofactor.

The enzyme catalyses adenosine(37) in tRNA + dimethylallyl diphosphate = N(6)-dimethylallyladenosine(37) in tRNA + diphosphate. In terms of biological role, catalyzes the transfer of a dimethylallyl group onto the adenine at position 37 in tRNAs that read codons beginning with uridine, leading to the formation of N6-(dimethylallyl)adenosine (i(6)A). The chain is tRNA dimethylallyltransferase from Rhodospirillum centenum (strain ATCC 51521 / SW).